A 228-amino-acid polypeptide reads, in one-letter code: Ornithine decarboxylase antizyme 1 (228 aa).

Positions 17–55 (REKEGDKPSATIHASRTMPLLSLHSRGGSSSESSRVSLH) are disordered. Positions 36–55 (LLSLHSRGGSSSESSRVSLH) are enriched in low complexity.

This sequence belongs to the ODC antizyme family. Interacts with ODC1 and thereby sterically blocks ODC homodimerization. Forms a ternary complex with PSMB4 and OAZ1 before PSMB4 is incorporated into the 20S proteasome. Interacts with AZIN2; this interaction disrupts the interaction between the antizyme and ODC1. Interacts with FAM171A1.

Its function is as follows. Ornithine decarboxylase (ODC) antizyme protein that negatively regulates ODC activity and intracellular polyamine biosynthesis and uptake in response to increased intracellular polyamine levels. Binds to ODC monomers, inhibiting the assembly of the functional ODC homodimer, and targets the monomers for ubiquitin-independent proteolytic destruction by the 26S proteasome. Triggers ODC degradation by inducing the exposure of a cryptic proteasome-interacting surface of ODC. Stabilizes AZIN2 by interfering with its ubiquitination. Also inhibits cellular uptake of polyamines by inactivating the polyamine uptake transporter. SMAD1/OAZ1/PSMB4 complex mediates the degradation of the CREBBP/EP300 repressor SNIP1. Involved in the translocation of AZIN2 from ER-Golgi intermediate compartment (ERGIC) to the cytosol. This is Ornithine decarboxylase antizyme 1 (OAZ1) from Homo sapiens (Human).